The chain runs to 430 residues: Adenylosuccinate synthetase (430 aa).

Residues 13-19 and 41-43 contribute to the GTP site; these read GDEGKGK and GHT. The Proton acceptor role is filled by aspartate 14. The Mg(2+) site is built by aspartate 14 and glycine 41. IMP contacts are provided by residues 14–17, 39–42, threonine 130, arginine 144, glutamine 225, threonine 240, and arginine 304; these read DEGK and NAGH. The active-site Proton donor is the histidine 42. 300–306 contributes to the substrate binding site; that stretch reads ASTGRPR. Residues arginine 306, 332 to 334, and 414 to 416 contribute to the GTP site; these read KLD and STG.

This sequence belongs to the adenylosuccinate synthetase family. As to quaternary structure, homodimer. Mg(2+) is required as a cofactor.

The protein localises to the cytoplasm. It carries out the reaction IMP + L-aspartate + GTP = N(6)-(1,2-dicarboxyethyl)-AMP + GDP + phosphate + 2 H(+). It functions in the pathway purine metabolism; AMP biosynthesis via de novo pathway; AMP from IMP: step 1/2. Plays an important role in the de novo pathway of purine nucleotide biosynthesis. Catalyzes the first committed step in the biosynthesis of AMP from IMP. The polypeptide is Adenylosuccinate synthetase (Xanthomonas oryzae pv. oryzae (strain PXO99A)).